The following is a 137-amino-acid chain: MLQPKRTKFRKQFKGRIHGTAKGGTNLDFGGFGLKALEPNRVTAREIEAARRAITREMKRAGRVWIRIFPDLPVTSKPTEVRMGKGKGAVDYWAARVKPGRIMFEIDGVSEETAREALRLGAAKLSVRTRFVQRIAE.

Belongs to the universal ribosomal protein uL16 family. In terms of assembly, part of the 50S ribosomal subunit.

In terms of biological role, binds 23S rRNA and is also seen to make contacts with the A and possibly P site tRNAs. The sequence is that of Large ribosomal subunit protein uL16 from Mesorhizobium japonicum (strain LMG 29417 / CECT 9101 / MAFF 303099) (Mesorhizobium loti (strain MAFF 303099)).